Reading from the N-terminus, the 82-residue chain is Large ribosomal subunit protein uL23 (82 aa).

The protein belongs to the universal ribosomal protein uL23 family. In terms of assembly, part of the 50S ribosomal subunit. Contacts protein L29.

Its function is as follows. Binds to 23S rRNA. One of the proteins that surrounds the polypeptide exit tunnel on the outside of the ribosome. This Picrophilus torridus (strain ATCC 700027 / DSM 9790 / JCM 10055 / NBRC 100828 / KAW 2/3) protein is Large ribosomal subunit protein uL23.